A 199-amino-acid polypeptide reads, in one-letter code: Puromycin N-acetyltransferase (199 aa).

Residues 6–198 form the N-acetyltransferase domain; that stretch reads PTVRLATRDD…RTWCMTRKPG (193 aa).

In terms of biological role, detoxification of puromycin. This is Puromycin N-acetyltransferase (pac) from Streptomyces alboniger.